The following is a 439-amino-acid chain: Coiled-coil domain-containing protein 166 (439 aa).

Residues 1–28 (MAPKKKRGPSAGSQPGGAAAAGAEQPLS) are disordered. Residues 9–23 (PSAGSQPGGAAAAGA) show a composition bias toward low complexity. 2 coiled-coil regions span residues 27–74 (LSER…EENR) and 121–213 (DGVR…VRAL). Residues 276-439 (PGGPPLWERP…AAAEASPGRA (164 aa)) form a disordered region. A compositionally biased stretch (polar residues) spans 338 to 365 (VLSSMDSRVPSLATSKVGSRMPSLTASR). Composition is skewed to low complexity over residues 376-392 (SLEGSGISSGSSPRVSS) and 428-439 (AEAAAEASPGRA).

In Homo sapiens (Human), this protein is Coiled-coil domain-containing protein 166 (CCDC166).